Here is a 258-residue protein sequence, read N- to C-terminus: 6-phosphogluconolactonase (258 aa).

Belongs to the glucosamine/galactosamine-6-phosphate isomerase family. 6-phosphogluconolactonase subfamily.

It carries out the reaction 6-phospho-D-glucono-1,5-lactone + H2O = 6-phospho-D-gluconate + H(+). The protein operates within carbohydrate degradation; pentose phosphate pathway; D-ribulose 5-phosphate from D-glucose 6-phosphate (oxidative stage): step 2/3. Its function is as follows. Hydrolysis of 6-phosphogluconolactone to 6-phosphogluconate. In Chlamydia pneumoniae (Chlamydophila pneumoniae), this protein is 6-phosphogluconolactonase (pgl).